The primary structure comprises 208 residues: Proteasome subunit beta 2 (208 aa).

Residues 1 to 9 (MSGKKIVSK) constitute a propeptide, removed in mature form; by autocatalysis. Residue T10 is the Nucleophile of the active site.

The protein belongs to the peptidase T1B family. In terms of assembly, the 20S proteasome core is composed of 14 alpha and 14 beta subunits that assemble into four stacked heptameric rings, resulting in a barrel-shaped structure. The two inner rings, each composed of seven catalytic beta subunits, are sandwiched by two outer rings, each composed of seven alpha subunits. The catalytic chamber with the active sites is on the inside of the barrel. Has a gated structure, the ends of the cylinder being occluded by the N-termini of the alpha-subunits. Is capped at one or both ends by the proteasome regulatory ATPase, PAN.

Its subcellular location is the cytoplasm. The catalysed reaction is Cleavage of peptide bonds with very broad specificity.. With respect to regulation, the formation of the proteasomal ATPase PAN-20S proteasome complex, via the docking of the C-termini of PAN into the intersubunit pockets in the alpha-rings, triggers opening of the gate for substrate entry. Interconversion between the open-gate and close-gate conformations leads to a dynamic regulation of the 20S proteasome proteolysis activity. Its function is as follows. Component of the proteasome core, a large protease complex with broad specificity involved in protein degradation. This chain is Proteasome subunit beta 2, found in Staphylothermus marinus (strain ATCC 43588 / DSM 3639 / JCM 9404 / F1).